Reading from the N-terminus, the 457-residue chain is PDZ and LIM domain protein 7 (457 aa).

The 85-residue stretch at M1 to Q85 folds into the PDZ domain. S78 bears the Phosphoserine mark. 2 disordered regions span residues S82 to S166 and F186 to V226. Position 96 is a phosphothreonine (T96). R103 is subject to Asymmetric dimethylarginine. The residue at position 111 (S111) is a Phosphoserine. The segment covering D126–L135 has biased composition (polar residues). The segment covering S144–P157 has biased composition (basic and acidic residues). S247 carries the post-translational modification Phosphoserine. LIM zinc-binding domains follow at residues P280–A338, P339–T398, and K399–V457.

In terms of assembly, specifically binds via its LIM zinc-binding 3 domain (LIM 3) domain to endocytic codes of INSR, but not with those of IGF1R, LDLR, TFRC, or EGFR. Interacts with various PKC isoforms through the LIM zinc-binding domains. Binds to RET in a phosphorylation-independent manner via its LIM zinc-binding domain 2 (LIM 2). Probably part of a complex with SHC and the RET dimer. Interacts with TPM2, TBX4 and TBX5.

It localises to the cytoplasm. Its subcellular location is the cytoskeleton. In terms of biological role, may function as a scaffold on which the coordinated assembly of proteins can occur. May play a role as an adapter that, via its PDZ domain, localizes LIM-binding proteins to actin filaments of both skeletal muscle and nonmuscle tissues. Involved in both of the two fundamental mechanisms of bone formation, direct bone formation (e.g. embryonic flat bones mandible and cranium), and endochondral bone formation (e.g. embryonic long bone development). Plays a role during fracture repair. Involved in BMP6 signaling pathway. The polypeptide is PDZ and LIM domain protein 7 (Pdlim7) (Mus musculus (Mouse)).